The primary structure comprises 693 residues: Serine/threonine-protein kinase Pkn1 (693 aa).

The Protein kinase domain maps to 59–328 (FRLVRRLGRG…QVALAEHVRV (270 aa)). ATP is bound by residues 65–73 (LGRGGMGAV) and Lys-88. Asp-180 serves as the catalytic Proton acceptor. One can recognise a PilZ domain in the interval 393 to 491 (LVEVPVQVVL…LKAAVDALLQ (99 aa)). The TPR repeat unit spans residues 630–663 (ARSHFQSGGALERDGQLSQALDQYERGLKLAPLE).

It belongs to the protein kinase superfamily. Ser/Thr protein kinase family. Post-translationally, autophosphorylated.

It catalyses the reaction L-seryl-[protein] + ATP = O-phospho-L-seryl-[protein] + ADP + H(+). It carries out the reaction L-threonyl-[protein] + ATP = O-phospho-L-threonyl-[protein] + ADP + H(+). Its activity is regulated as follows. May be regulated by calcium or a calmodulin-like protein. In terms of biological role, plays an essential role in proper timing of early development events. The protein is Serine/threonine-protein kinase Pkn1 (pkn1) of Myxococcus xanthus.